Reading from the N-terminus, the 379-residue chain is Early boundary activity protein 3 (379 aa).

The heterotrimeric Elba complex consists of Elba1, Elba2 and Elba3.

The protein localises to the nucleus. Functionally, the heterotrimeric Elba complex is required for chromatin domain boundary function during early embryogenesis. It binds to a 8-bp sequence 5'-CCAATAAG-3' in the Fab-7 insulator or boundary element in the bithorax complex and contributes to its insulator or boundary activity. Elba3 lacks DNA-binding activity and plays the role of an adapter protein, bringing Elba1 and 2 together, thereby establishing a complex that recognizes the asymmetric sequence motif through the BEN domains of Elba1 and 2. The chain is Early boundary activity protein 3 from Drosophila melanogaster (Fruit fly).